Reading from the N-terminus, the 187-residue chain is GTPase KRas (187 aa).

Residues 10 to 18 (GAVGVGKSA), 29 to 35 (VDEYDPT), 59 to 60 (AG), and 116 to 119 (NKCA) contribute to the GTP site. The Effector region motif lies at 32–40 (YDPTIEDSY). A disordered region spans residues 168–187 (EKMSKDGKKKKKSKTKCSIL). At C184 the chain carries Cysteine methyl ester. A lipid anchor (S-farnesyl cysteine) is attached at C184. Positions 185-187 (SIL) are cleaved as a propeptide — removed in mature form.

Belongs to the small GTPase superfamily. Ras family.

It localises to the cell membrane. It is found in the cytoplasm. It carries out the reaction GTP + H2O = GDP + phosphate + H(+). Alternates between an inactive form bound to GDP and an active form bound to GTP. Activated by a guanine nucleotide-exchange factor (GEF) and inactivated by a GTPase-activating protein (GAP). Functionally, ras proteins bind GDP/GTP and possess intrinsic GTPase activity. Plays an important role in the regulation of cell proliferation. The chain is GTPase KRas (kras) from Xenopus laevis (African clawed frog).